A 427-amino-acid chain; its full sequence is Glutamate-1-semialdehyde 2,1-aminomutase (427 aa).

Residue Lys267 is modified to N6-(pyridoxal phosphate)lysine.

Belongs to the class-III pyridoxal-phosphate-dependent aminotransferase family. HemL subfamily. As to quaternary structure, homodimer. Pyridoxal 5'-phosphate is required as a cofactor.

The protein resides in the cytoplasm. The catalysed reaction is (S)-4-amino-5-oxopentanoate = 5-aminolevulinate. Its pathway is porphyrin-containing compound metabolism; protoporphyrin-IX biosynthesis; 5-aminolevulinate from L-glutamyl-tRNA(Glu): step 2/2. This chain is Glutamate-1-semialdehyde 2,1-aminomutase, found in Geotalea daltonii (strain DSM 22248 / JCM 15807 / FRC-32) (Geobacter daltonii).